Reading from the N-terminus, the 574-residue chain is Actin-binding protein wsp1 (574 aa).

Residues 19-130 enclose the WH1 domain; the sequence is IPKSTNKIIA…KKVLDKGCHP (112 aa). Disordered stretches follow at residues 144-186, 221-494, and 517-574; these read KGSS…ELLN, AGTP…IAEL, and KSRK…DEWD. Polar residues predominate over residues 149–158; sequence HAPNNSNIQP. 2 stretches are compositionally biased toward pro residues: residues 230–240 and 251–260; these read PPIPPSIPSSR and PAPPPIPPPS. Composition is skewed to low complexity over residues 297–306 and 324–335; these read SRVSAAALAA and KPPIGNGSSNSS. Positions 352–368 are enriched in pro residues; that stretch reads PLPPQGRSAPPPPPPRS. Ser386 carries the post-translational modification Phosphoserine. Positions 415–485 are enriched in pro residues; that stretch reads PPVPTPPSLP…PPPAPAPAPA (71 aa). Residues 499 to 518 enclose the WH2 domain; sequence GRANLMASIRASGGMDLLKS. The segment covering 521 to 545 has biased composition (polar residues); sequence VSASPSVASTKTSNPPVEAPPSNNL. Acidic residues predominate over residues 563–574; that stretch reads SDEEDEDDDEWD.

In terms of assembly, interacts with vrp1.

It localises to the cytoplasm. The protein resides in the cytoskeleton. In terms of biological role, has a role in regulating actin assembly, so regulating polarized growth. This Schizosaccharomyces pombe (strain 972 / ATCC 24843) (Fission yeast) protein is Actin-binding protein wsp1 (wsp1).